Consider the following 144-residue polypeptide: Protein MIX23 (144 aa).

At Ala-2 the chain carries N-acetylalanine. Positions 82–120 (VKSLREEREKNLDDLTLLKRLRKEQTKLKWMQSELNVEE) form a coiled coil. Lys-100 is subject to N6-acetyllysine.

It belongs to the MIX23 family.

The polypeptide is Protein MIX23 (Mus musculus (Mouse)).